Consider the following 352-residue polypeptide: 4-hydroxy-3-methylbut-2-en-1-yl diphosphate synthase (flavodoxin) (352 aa).

The [4Fe-4S] cluster site is built by Cys-262, Cys-265, Cys-297, and Glu-304.

The protein belongs to the IspG family. Requires [4Fe-4S] cluster as cofactor.

It catalyses the reaction (2E)-4-hydroxy-3-methylbut-2-enyl diphosphate + oxidized [flavodoxin] + H2O + 2 H(+) = 2-C-methyl-D-erythritol 2,4-cyclic diphosphate + reduced [flavodoxin]. It functions in the pathway isoprenoid biosynthesis; isopentenyl diphosphate biosynthesis via DXP pathway; isopentenyl diphosphate from 1-deoxy-D-xylulose 5-phosphate: step 5/6. Functionally, converts 2C-methyl-D-erythritol 2,4-cyclodiphosphate (ME-2,4cPP) into 1-hydroxy-2-methyl-2-(E)-butenyl 4-diphosphate. This Campylobacter concisus (strain 13826) protein is 4-hydroxy-3-methylbut-2-en-1-yl diphosphate synthase (flavodoxin).